We begin with the raw amino-acid sequence, 491 residues long: Katanin p60 ATPase-containing subunit A1 (491 aa).

Residues 1-29 (MSLLMISENVKLAREYALLGNYDSAMVYY) form an interaction with KATNB1 region. Positions 1 to 75 (MSLLMISENV…VKDIMKTLES (75 aa)) are interaction with dynein and NDEL1. Residues 1 to 185 (MSLLMISENV…EPETNKFDST (185 aa)) are interaction with microtubules. A phosphoserine; by DYRK2 mark is found at S42 and S109. Residues 87–185 (QHDLPASEGE…EPETNKFDST (99 aa)) are disordered. T133 carries the phosphothreonine; by DYRK2 modification. Over residues 145-169 (HNDRGKAVRCREKKEQNKGREEKNK) the composition is skewed to basic and acidic residues. Position 170 is a phosphoserine (S170). 249–256 (GPPGTGKT) contributes to the ATP binding site.

It belongs to the AAA ATPase family. Katanin p60 subunit A1 subfamily. Can homooligomerize into hexameric rings, which may be promoted by interaction with microtubules. Interacts with KATNB1, which may serve as a targeting subunit. Interacts with ASPM; the katanin complex formation KATNA1:KATNB1 is required for the association of ASPM Interacts with dynein and NDEL1. Associates with the E3 ligase complex containing DYRK2, EDD/UBR5, DDB1 and DCAF1 proteins (EDVP complex). Interacts with KLHL42 (via the kelch domains). Interacts with CUL3; the interaction is enhanced by KLHL42. Interacts with KATNB1 and KATNBL1. Interacts with CAMSAP2 and CAMSAP3; leading to regulate the length of CAMSAP-decorated microtubule stretches. In terms of processing, phosphorylation by DYRK2 triggers ubiquitination and subsequent degradation. Ubiquitinated by the BCR(KLHL42) E3 ubiquitin ligase complex, leading to its proteasomal degradation. Ubiquitinated by the EDVP E3 ligase complex and subsequently targeted for proteasomal degradation.

It localises to the cytoplasm. Its subcellular location is the midbody. The protein localises to the cytoskeleton. The protein resides in the microtubule organizing center. It is found in the centrosome. It localises to the spindle pole. Its subcellular location is the spindle. It carries out the reaction n ATP + n H2O + a microtubule = n ADP + n phosphate + (n+1) alpha/beta tubulin heterodimers.. ATPase activity is stimulated by microtubules, which promote homooligomerization. ATP-dependent microtubule severing is stimulated by interaction with KATNB1. In terms of biological role, catalytic subunit of a complex which severs microtubules in an ATP-dependent manner. Microtubule severing may promote rapid reorganization of cellular microtubule arrays and the release of microtubules from the centrosome following nucleation. Microtubule release from the mitotic spindle poles may allow depolymerization of the microtubule end proximal to the spindle pole, leading to poleward microtubule flux and poleward motion of chromosome. Microtubule release within the cell body of neurons may be required for their transport into neuronal processes by microtubule-dependent motor proteins. This transport is required for axonal growth. The protein is Katanin p60 ATPase-containing subunit A1 of Macaca fascicularis (Crab-eating macaque).